The primary structure comprises 194 residues: Imidazoleglycerol-phosphate dehydratase (194 aa).

The protein belongs to the imidazoleglycerol-phosphate dehydratase family.

It localises to the cytoplasm. It catalyses the reaction D-erythro-1-(imidazol-4-yl)glycerol 3-phosphate = 3-(imidazol-4-yl)-2-oxopropyl phosphate + H2O. The protein operates within amino-acid biosynthesis; L-histidine biosynthesis; L-histidine from 5-phospho-alpha-D-ribose 1-diphosphate: step 6/9. This is Imidazoleglycerol-phosphate dehydratase from Bacillus subtilis (strain 168).